A 342-amino-acid chain; its full sequence is [Citrate [pro-3S]-lyase] ligase (342 aa).

Positions M1–E127 constitute an N-acetyltransferase domain.

It carries out the reaction holo-[citrate lyase ACP] + acetate + ATP = acetyl-[citrate lyase ACP] + AMP + diphosphate. In terms of biological role, acetylation of prosthetic group (2-(5''-phosphoribosyl)-3'-dephosphocoenzyme-A) of the gamma subunit of citrate lyase. This is [Citrate [pro-3S]-lyase] ligase (citC) from Klebsiella pneumoniae.